The following is a 661-amino-acid chain: UvrABC system protein C (661 aa).

The GIY-YIG domain occupies H52–V130. Residues Q240 to I275 enclose the UVR domain.

This sequence belongs to the UvrC family. Interacts with UvrB in an incision complex.

It localises to the cytoplasm. Its function is as follows. The UvrABC repair system catalyzes the recognition and processing of DNA lesions. UvrC both incises the 5' and 3' sides of the lesion. The N-terminal half is responsible for the 3' incision and the C-terminal half is responsible for the 5' incision. This is UvrABC system protein C from Bartonella henselae (strain ATCC 49882 / DSM 28221 / CCUG 30454 / Houston 1) (Rochalimaea henselae).